The primary structure comprises 148 residues: MYFAIRLSFVLAVLFCLTGNGSARMLDADRNRLQQLQIRSQQSADANTQVDIAYEVIGIYDKYKGQGGSNVLREAQLNSQVNDFKRKTMVIDGVPAQGGVWGILGAIKKAADAVPDNVKKDAENLVKSSTKVLVRGIYDYLMGKMKQH.

Residues 1–23 (MYFAIRLSFVLAVLFCLTGNGSA) form the signal peptide.

This sequence belongs to the Turandot family.

It is found in the secreted. Its function is as follows. A humoral factor that may play a role in stress tolerance. The polypeptide is Protein Turandot Z (Drosophila simulans (Fruit fly)).